Reading from the N-terminus, the 278-residue chain is Undecaprenyl-diphosphatase (278 aa).

8 consecutive transmembrane segments (helical) span residues 2–22, 44–64, 85–105, 113–133, 150–170, 189–209, 223–243, and 253–273; these read ALVE…TEWL, AFME…VVLL, IEMW…GLLW, FYNY…FIVI, ITYT…IFPG, TVAA…ASAL, LMIL…SIKF, and FKIF…YFSA.

The protein belongs to the UppP family.

The protein localises to the cell membrane. It carries out the reaction di-trans,octa-cis-undecaprenyl diphosphate + H2O = di-trans,octa-cis-undecaprenyl phosphate + phosphate + H(+). Its function is as follows. Catalyzes the dephosphorylation of undecaprenyl diphosphate (UPP). Confers resistance to bacitracin. In Desulfitobacterium hafniense (strain DSM 10664 / DCB-2), this protein is Undecaprenyl-diphosphatase.